A 454-amino-acid chain; its full sequence is UPF0210 protein BLA_0552 (454 aa).

Belongs to the UPF0210 family. In terms of assembly, homodimer.

The chain is UPF0210 protein BLA_0552 from Bifidobacterium animalis subsp. lactis (strain AD011).